A 486-amino-acid chain; its full sequence is Kynurenine 3-monooxygenase (486 aa).

Helical transmembrane passes span 401–424 and 437–459; these read LLFW…HMRY and ILTR…LCYR.

Belongs to the aromatic-ring hydroxylase family. KMO subfamily. The cofactor is FAD.

It is found in the mitochondrion. The protein resides in the membrane. It catalyses the reaction L-kynurenine + NADPH + O2 + H(+) = 3-hydroxy-L-kynurenine + NADP(+) + H2O. It participates in cofactor biosynthesis; NAD(+) biosynthesis; quinolinate from L-kynurenine: step 1/3. Functionally, catalyzes the hydroxylation of L-kynurenine (L-Kyn) to form 3-hydroxy-L-kynurenine (L-3OHKyn). Required for synthesis of quinolinic acid. This Anopheles gambiae (African malaria mosquito) protein is Kynurenine 3-monooxygenase (kh).